Here is a 559-residue protein sequence, read N- to C-terminus: 2,3-bisphosphoglycerate-independent phosphoglycerate mutase (559 aa).

Mn(2+) is bound by residues Asp-28 and Ser-81. The active-site Phosphoserine intermediate is the Ser-81. Substrate is bound by residues His-140, 170–171 (RD), Arg-206, Arg-213, 286–289 (RADR), and Lys-361. Mn(2+)-binding residues include Asp-430, His-434, Asp-471, His-472, and His-501.

It belongs to the BPG-independent phosphoglycerate mutase family. Monomer. The cofactor is Mn(2+). Post-translationally, the N-terminus is blocked. As to expression, found ubiquitously in germinating seed.

It is found in the cytoplasm. The enzyme catalyses (2R)-2-phosphoglycerate = (2R)-3-phosphoglycerate. Its pathway is carbohydrate degradation; glycolysis; pyruvate from D-glyceraldehyde 3-phosphate: step 3/5. In terms of biological role, catalyzes the interconversion of 2-phosphoglycerate and 3-phosphoglycerate. The protein is 2,3-bisphosphoglycerate-independent phosphoglycerate mutase of Zea mays (Maize).